The following is a 61-amino-acid chain: Phosphoenolpyruvate synthase (61 aa).

Belongs to the PEP-utilizing enzyme family. It depends on Mg(2+) as a cofactor.

The enzyme catalyses pyruvate + ATP + H2O = phosphoenolpyruvate + AMP + phosphate + 2 H(+). It functions in the pathway carbohydrate biosynthesis; gluconeogenesis. Its function is as follows. Catalyzes the phosphorylation of pyruvate to phosphoenolpyruvate. This is Phosphoenolpyruvate synthase (ppsA) from Enterobacter agglomerans (Erwinia herbicola).